A 178-amino-acid chain; its full sequence is Nicotinamide-nucleotide adenylyltransferase (178 aa).

It belongs to the archaeal NMN adenylyltransferase family.

It is found in the cytoplasm. The enzyme catalyses beta-nicotinamide D-ribonucleotide + ATP + H(+) = diphosphate + NAD(+). Its pathway is cofactor biosynthesis; NAD(+) biosynthesis; NAD(+) from nicotinamide D-ribonucleotide: step 1/1. The sequence is that of Nicotinamide-nucleotide adenylyltransferase from Pyrobaculum arsenaticum (strain DSM 13514 / JCM 11321 / PZ6).